The chain runs to 311 residues: Glycine--tRNA ligase alpha subunit (311 aa).

Belongs to the class-II aminoacyl-tRNA synthetase family. As to quaternary structure, tetramer of two alpha and two beta subunits.

The protein resides in the cytoplasm. The enzyme catalyses tRNA(Gly) + glycine + ATP = glycyl-tRNA(Gly) + AMP + diphosphate. This chain is Glycine--tRNA ligase alpha subunit, found in Brucella anthropi (strain ATCC 49188 / DSM 6882 / CCUG 24695 / JCM 21032 / LMG 3331 / NBRC 15819 / NCTC 12168 / Alc 37) (Ochrobactrum anthropi).